The sequence spans 248 residues: Segregation and condensation protein A (248 aa).

It belongs to the ScpA family. Component of a cohesin-like complex composed of ScpA, ScpB and the Smc homodimer, in which ScpA and ScpB bind to the head domain of Smc. The presence of the three proteins is required for the association of the complex with DNA.

It localises to the cytoplasm. Participates in chromosomal partition during cell division. May act via the formation of a condensin-like complex containing Smc and ScpB that pull DNA away from mid-cell into both cell halves. This chain is Segregation and condensation protein A, found in Clostridium perfringens (strain ATCC 13124 / DSM 756 / JCM 1290 / NCIMB 6125 / NCTC 8237 / Type A).